Consider the following 379-residue polypeptide: RIB43A-like with coiled-coils protein 1 (379 aa).

Residues 1-21 are disordered; that stretch reads MYNINQSTDTKEAAAIEARRN. Residues 9-21 are compositionally biased toward basic and acidic residues; sequence DTKEAAAIEARRN. Coiled coils occupy residues 85 to 111, 161 to 241, and 280 to 304; these read ADRTRRLAKKVQEFREQKQQLKNGREF, RYNL…KANL, and EQRAAIRKEQEVQRSKKEAHRQAEK.

The protein belongs to the RIB43A family. In terms of assembly, microtubule inner protein component of sperm flagellar doublet microtubules.

The protein resides in the cytoplasm. It is found in the cytoskeleton. Its subcellular location is the flagellum axoneme. The protein is RIB43A-like with coiled-coils protein 1 (RIBC1) of Macaca fascicularis (Crab-eating macaque).